A 673-amino-acid polypeptide reads, in one-letter code: DNA ligase (673 aa).

Residues 35–39 (DADYD), 84–85 (SL), and Glu115 contribute to the NAD(+) site. Lys117 acts as the N6-AMP-lysine intermediate in catalysis. Residues Arg138, Glu180, Lys296, and Lys320 each coordinate NAD(+). Residues Cys415, Cys418, Cys433, and Cys438 each coordinate Zn(2+). One can recognise a BRCT domain in the interval 595–673 (ERGTALAGQT…EDALKKLLGK (79 aa)).

It belongs to the NAD-dependent DNA ligase family. LigA subfamily. Mg(2+) serves as cofactor. The cofactor is Mn(2+).

The enzyme catalyses NAD(+) + (deoxyribonucleotide)n-3'-hydroxyl + 5'-phospho-(deoxyribonucleotide)m = (deoxyribonucleotide)n+m + AMP + beta-nicotinamide D-nucleotide.. Functionally, DNA ligase that catalyzes the formation of phosphodiester linkages between 5'-phosphoryl and 3'-hydroxyl groups in double-stranded DNA using NAD as a coenzyme and as the energy source for the reaction. It is essential for DNA replication and repair of damaged DNA. The sequence is that of DNA ligase from Koribacter versatilis (strain Ellin345).